The following is a 391-amino-acid chain: Dual-specificity RNA methyltransferase RlmN (391 aa).

The active-site Proton acceptor is glutamate 115. A Radical SAM core domain is found at 121 to 363 (EENRGTLCIS…SPIRTPRGED (243 aa)). The cysteines at positions 128 and 368 are disulfide-linked. Residues cysteine 135, cysteine 139, and cysteine 142 each coordinate [4Fe-4S] cluster. Residues 194–195 (GE), serine 226, 248–250 (SFH), and asparagine 325 each bind S-adenosyl-L-methionine. The active-site S-methylcysteine intermediate is cysteine 368.

It belongs to the radical SAM superfamily. RlmN family. [4Fe-4S] cluster serves as cofactor.

It localises to the cytoplasm. It catalyses the reaction adenosine(2503) in 23S rRNA + 2 reduced [2Fe-2S]-[ferredoxin] + 2 S-adenosyl-L-methionine = 2-methyladenosine(2503) in 23S rRNA + 5'-deoxyadenosine + L-methionine + 2 oxidized [2Fe-2S]-[ferredoxin] + S-adenosyl-L-homocysteine. The catalysed reaction is adenosine(37) in tRNA + 2 reduced [2Fe-2S]-[ferredoxin] + 2 S-adenosyl-L-methionine = 2-methyladenosine(37) in tRNA + 5'-deoxyadenosine + L-methionine + 2 oxidized [2Fe-2S]-[ferredoxin] + S-adenosyl-L-homocysteine. In terms of biological role, specifically methylates position 2 of adenine 2503 in 23S rRNA and position 2 of adenine 37 in tRNAs. m2A2503 modification seems to play a crucial role in the proofreading step occurring at the peptidyl transferase center and thus would serve to optimize ribosomal fidelity. This is Dual-specificity RNA methyltransferase RlmN from Paracoccus denitrificans (strain Pd 1222).